Reading from the N-terminus, the 226-residue chain is Tyramine N-feruloyltransferase 10/30 (226 aa).

Positions 29–45 (HIYKLFYQIHEYHNYTH) are important in binding site and for catalytic activity. The N-acetyltransferase domain occupies 72–222 (VLLLEVSPTP…VGDALQKYAD (151 aa)).

Belongs to the acetyltransferase family. As to quaternary structure, homodimer.

It is found in the cytoplasm. It catalyses the reaction tyramine + (E)-feruloyl-CoA = N-[(E)-feruloyl]tyramine + CoA + H(+). Inhibited by (2-hydroxyphenyl)amino sulfinyl acetic acid 1,1-dimethylethyl ester, by DEPC and by N-ethylmaleimide. Its function is as follows. Synthesizes amides which are involved in stress response in the cell wall. Catalyzes the synthesis of hydroxycinnamic acid amides from hydroxycinnamoyl-CoA thioesters and various hydroxyphenylethylamines such as 4-coumaroyl-CoA and sinapoyl-CoA. The chain is Tyramine N-feruloyltransferase 10/30 (THT10) from Nicotiana tabacum (Common tobacco).